A 210-amino-acid chain; its full sequence is 7-methyl-GTP pyrophosphatase (210 aa).

Aspartate 79 (proton acceptor) is an active-site residue.

It belongs to the Maf family. YceF subfamily. It depends on a divalent metal cation as a cofactor.

Its subcellular location is the cytoplasm. It carries out the reaction N(7)-methyl-GTP + H2O = N(7)-methyl-GMP + diphosphate + H(+). Functionally, nucleoside triphosphate pyrophosphatase that hydrolyzes 7-methyl-GTP (m(7)GTP). May have a dual role in cell division arrest and in preventing the incorporation of modified nucleotides into cellular nucleic acids. The protein is 7-methyl-GTP pyrophosphatase of Burkholderia orbicola (strain AU 1054).